We begin with the raw amino-acid sequence, 283 residues long: NFU1 iron-sulfur cluster scaffold homolog, mitochondrial (283 aa).

Residues 1-30 constitute a mitochondrion transit peptide; the sequence is MSKFLSQAALNTLRNTRLGSRQLVRSFAGI. A nifU region spans residues 182 to 250; sequence IKELLDTRIR…IPEVESVEQV (69 aa). Positions 219 and 222 each coordinate [4Fe-4S] cluster.

This sequence belongs to the NifU family.

It localises to the mitochondrion. Functionally, molecular scaffold for [Fe-S] cluster assembly of mitochondrial iron-sulfur proteins. This Drosophila erecta (Fruit fly) protein is NFU1 iron-sulfur cluster scaffold homolog, mitochondrial.